We begin with the raw amino-acid sequence, 209 residues long: FMN-dependent NADH:quinone oxidoreductase (209 aa).

FMN contacts are provided by residues serine 9, 19 to 21 (SVS), and 143 to 146 (TRGG).

The protein belongs to the azoreductase type 1 family. As to quaternary structure, homodimer. Requires FMN as cofactor.

The catalysed reaction is 2 a quinone + NADH + H(+) = 2 a 1,4-benzosemiquinone + NAD(+). The enzyme catalyses N,N-dimethyl-1,4-phenylenediamine + anthranilate + 2 NAD(+) = 2-(4-dimethylaminophenyl)diazenylbenzoate + 2 NADH + 2 H(+). Its function is as follows. Quinone reductase that provides resistance to thiol-specific stress caused by electrophilic quinones. In terms of biological role, also exhibits azoreductase activity. Catalyzes the reductive cleavage of the azo bond in aromatic azo compounds to the corresponding amines. The protein is FMN-dependent NADH:quinone oxidoreductase of Leptothrix cholodnii (strain ATCC 51168 / LMG 8142 / SP-6) (Leptothrix discophora (strain SP-6)).